The primary structure comprises 1426 residues: Homeobox protein cut-like 2 (1426 aa).

Residues 77 to 104 are disordered; it reads PEPPSAREQNEGTCPTGHTPANGNHLPG. A Phosphoserine modification is found at S81. A coiled-coil region spans residues 131–311; it reads ITLAARLGEA…IKTELSILRA (181 aa). Disordered regions lie at residues 351-419, 460-488, 599-628, 653-676, 743-769, and 904-977; these read ALLA…FPSL, KPPSAPAASVPCPEPTGAPEAVDGAGPEE, EIESQKGGESKNSPASVSIPNGTASSSTSE, ESGPRGRSVPPSPPERPSPATASQ, YASVSPSLSSSSSYSGQPNGRAWPRGD, and LGQG…SSSQ. Over residues 374 to 395 the composition is skewed to pro residues; that stretch reads PPYPPQLPPPPGPEDPLSPSPA. Composition is skewed to low complexity over residues 397-408 and 460-470; these read PLLGPSLGPDGP and KPPSAPAASVP. Residues 482–569 constitute a DNA-binding region (CUT 1); sequence DGAGPEEEQL…VLALRTIQVR (88 aa). The stretch at 587–655 forms a coiled coil; it reads DAIKSILEQA…QQALLEMESG (69 aa). Polar residues predominate over residues 608–628; it reads SKNSPASVSIPNGTASSSTSE. 3 stretches are compositionally biased toward low complexity: residues 743 to 757, 910 to 928, and 965 to 976; these read YASVSPSLSSSSSYS, QAPTQQPSASQASPTEPTS, and SSSLGGKPFSSS. A DNA-binding region (CUT 2) is located at residues 828–915; the sequence is QYELYMYREV…QGQGQAPTQQ (88 aa). The CUT 3 DNA-binding region spans 983–1070; that stretch reads QEMVAMSPEL…VEKLRDMKKL (88 aa). Residues 1113 to 1172 constitute a DNA-binding region (homeobox); it reads AKKPRVVLAPAEKEALRKAYQLEPYPSQQTIELLSFQLNLKTNTVINWFHNYRSRMRREM. Positions 1177-1392 are disordered; that stretch reads TQDDPDFDPS…AALHPSTKVN (216 aa). Composition is skewed to basic and acidic residues over residues 1233 to 1245 and 1260 to 1274; these read APDRALVKIKQEE and DPDRGQDGPKEEHTH. A compositionally biased stretch (low complexity) spans 1318–1332; that stretch reads LSFKSTSESSCCSLE. Polar residues predominate over residues 1338–1350; sequence PSVISSPDLTTCV. Residues 1351-1364 are compositionally biased toward low complexity; the sequence is SPAPSSSAPISPSL.

It belongs to the CUT homeobox family. In terms of tissue distribution, restricted to neural tissues. Expressed exclusively in the central and peripheral nervous systems.

It localises to the nucleus. In terms of biological role, transcription factor involved in the control of neuronal proliferation and differentiation in the brain. Regulates dendrite development and branching, dendritic spine formation, and synaptogenesis in cortical layers II-III. Binds to DNA in a sequence-specific manner. The protein is Homeobox protein cut-like 2 (Cux2) of Mus musculus (Mouse).